Reading from the N-terminus, the 177-residue chain is Disulfide bond formation protein B (177 aa).

Residues 1–14 are Cytoplasmic-facing; sequence MLALLKQFSEKRFV. A helical transmembrane segment spans residues 15 to 31; the sequence is WFLLAFSSLALESTALY. Over 32-49 the chain is Periplasmic; sequence FQYGMGLQPCVLCVYERL. Cysteines 41 and 44 form a disulfide. Residues 50-65 traverse the membrane as a helical segment; that stretch reads AMIGLFVAGIIALLQP. The Cytoplasmic portion of the chain corresponds to 66-72; that stretch reads LAFILRL. Residues 73–90 traverse the membrane as a helical segment; it reads IALALGLFSSIKGLLISF. Residues 91-145 lie on the Periplasmic side of the membrane; it reads RHLDLQMNPAPWKQCEFIPNFPETLPFHQWFPFIFNPTGSCNESQWSLFGLTMVQ. C105 and C131 are oxidised to a cystine. Residues 146–164 traverse the membrane as a helical segment; the sequence is WLVVIFSLYVVILTLLLIA. The Cytoplasmic portion of the chain corresponds to 165–177; that stretch reads QVIKTRKQRRLFN.

The protein belongs to the DsbB family.

Its subcellular location is the cell inner membrane. In terms of biological role, required for disulfide bond formation in some periplasmic proteins. Acts by oxidizing the DsbA protein. This Haemophilus influenzae (strain 86-028NP) protein is Disulfide bond formation protein B.